Here is a 1095-residue protein sequence, read N- to C-terminus: Putative disease resistance protein At4g11170 (1095 aa).

Positions 9-173 (WRYDVFPSFR…TISKDVLEKL (165 aa)) constitute a TIR domain. Glutamate 84 is an active-site residue. The NB-ARC domain maps to 168-454 (DVLEKLNATP…HENYLKQMII (287 aa)). LRR repeat units lie at residues 609-631 (CLVELNMSHSKLKKLWSGVQPLR), 632-654 (NLRTMNLNSSRNLEILPNLMEAT), 655-677 (KLNRLDLGWCESLVELPSSIKNL), 679-701 (HLILLEMSCCKKLEIIPTNINLP), 702-722 (SLEVLHFRYCTRLQTFPEIST), and 723-744 (NIRLLNLIGTAITEVPPSVKYW).

It catalyses the reaction NAD(+) + H2O = ADP-D-ribose + nicotinamide + H(+). The polypeptide is Putative disease resistance protein At4g11170 (Arabidopsis thaliana (Mouse-ear cress)).